Here is a 127-residue protein sequence, read N- to C-terminus: Small ribosomal subunit protein uS13 (127 aa).

Residues 96 to 127 (LPCHGQRTSTNARTRKGPKRTAVKKKGAAKKK) form a disordered region. Residues 108–127 (RTRKGPKRTAVKKKGAAKKK) are compositionally biased toward basic residues.

It belongs to the universal ribosomal protein uS13 family. Part of the 30S ribosomal subunit. Forms a loose heterodimer with protein S19. Forms two bridges to the 50S subunit in the 70S ribosome.

Functionally, located at the top of the head of the 30S subunit, it contacts several helices of the 16S rRNA. In the 70S ribosome it contacts the 23S rRNA (bridge B1a) and protein L5 of the 50S subunit (bridge B1b), connecting the 2 subunits; these bridges are implicated in subunit movement. Contacts the tRNAs in the A and P-sites. The chain is Small ribosomal subunit protein uS13 from Desulfosudis oleivorans (strain DSM 6200 / JCM 39069 / Hxd3) (Desulfococcus oleovorans).